Consider the following 338-residue polypeptide: Aspartate--ammonia ligase (338 aa).

Belongs to the class-II aminoacyl-tRNA synthetase family. AsnA subfamily.

Its subcellular location is the cytoplasm. It carries out the reaction L-aspartate + NH4(+) + ATP = L-asparagine + AMP + diphosphate + H(+). It participates in amino-acid biosynthesis; L-asparagine biosynthesis; L-asparagine from L-aspartate (ammonia route): step 1/1. The sequence is that of Aspartate--ammonia ligase from Lactobacillus delbrueckii subsp. bulgaricus (strain ATCC 11842 / DSM 20081 / BCRC 10696 / JCM 1002 / NBRC 13953 / NCIMB 11778 / NCTC 12712 / WDCM 00102 / Lb 14).